We begin with the raw amino-acid sequence, 305 residues long: P2Y purinoceptor 14 (305 aa).

At 1–29 (MDNTTTTEPPKQPCTRNTLITQQIIPMLY) the chain is on the extracellular side. N-linked (GlcNAc...) asparagine glycosylation occurs at asparagine 3. The helical transmembrane segment at 30–50 (CVVFITGVLLNGISGWIFFYV) threads the bilayer. The Cytoplasmic portion of the chain corresponds to 51-55 (PSSKS). Residues 56–76 (FIIYLKNIVVADFLMGLTFPF) form a helical membrane-spanning segment. The Extracellular segment spans residues 77-96 (KVLSDSGLGPWQLNVFVFRV). A helical transmembrane segment spans residues 97–117 (SAVIFYVNMYVSIAFFGLISF). Topologically, residues 118 to 139 (DRYYKIVKPLLVSIVQSVNYSK) are cytoplasmic. The chain crosses the membrane as a helical span at residues 140 to 160 (VLSVLVWVLMLLLAVPNIILT). A glycan (N-linked (GlcNAc...) asparagine) is linked at asparagine 161. Residues 161–188 (NQSVKDVTNIQCMELKNELGRKWHKASN) lie on the Extracellular side of the membrane. The helical transmembrane segment at 189–209 (YVFVSIFWIVFLLLTVFYMAI) threads the bilayer. Residues 210 to 234 (TRKIFKSHLKSRKNSISVKRKSSRN) lie on the Cytoplasmic side of the membrane. The helical transmembrane segment at 235 to 255 (IFSIVLAFVACFAPYHVARIP) threads the bilayer. Residues 256-278 (YTKSQTEGHYSCQAKETLLYTKE) are Extracellular-facing. A helical transmembrane segment spans residues 279–299 (FTLLLSAANVCLDPISISSYA). The Cytoplasmic portion of the chain corresponds to 300 to 305 (SRLEKS).

Belongs to the G-protein coupled receptor 1 family.

It localises to the cell membrane. Receptor for UDP-glucose coupled to G-proteins. This chain is P2Y purinoceptor 14 (P2ry14), found in Rattus norvegicus (Rat).